Here is a 309-residue protein sequence, read N- to C-terminus: MMELRCWGSDWGLPSVHPECLVVLAYARFAGAPLKVTPVDYTWASPKGTVPFLTSAGEDTHQPANILNFFRKQKYNADYVLSAKEGSDTLAYIALLEEKLLPAVLHTFWVDTENYCNVTRPWYASHTPFPLNYYLPGKMSRDALDRILVTRGQPPLYSLSEVEAQIYKDAKECLNLFSNRLGTAQYFFGSTPTSLDAFVFGFLAPLYKAHLHKVNLQQHLKQLSNLCHFCDHILSAYFVSDDAGTSAAGQEAIDANLQKLTQLVNKESNLIEKMDDNLRRSPQNRPQKLSTLKPVGGAENSHSSDLLSH.

Residues methionine 274–histidine 309 form a disordered region. Polar residues-rich tracts occupy residues arginine 280–serine 290 and asparagine 300–histidine 309.

It belongs to the metaxin family. Part of a large protein complex spanning both mitochondrial membranes termed the mitochondrial intermembrane space bridging (MIB) complex.

It localises to the mitochondrion. Its subcellular location is the mitochondrion outer membrane. In terms of biological role, could function in transport of proteins into the mitochondrion. The sequence is that of Metaxin-3 (mtx3) from Xenopus laevis (African clawed frog).